A 129-amino-acid polypeptide reads, in one-letter code: Large ribosomal subunit protein eL32 (129 aa).

The protein belongs to the eukaryotic ribosomal protein eL32 family.

This is Large ribosomal subunit protein eL32 (rpl32e) from Methanosarcina mazei (strain ATCC BAA-159 / DSM 3647 / Goe1 / Go1 / JCM 11833 / OCM 88) (Methanosarcina frisia).